Consider the following 233-residue polypeptide: MTNPLSDASSRVGSGLRIGVLALQGDFREHIHAVEAAGATGVGIRRPSELDDIDGLIIPGGESTTIDKLSRIFEVRDPLQKRIAEGLPVYGSCAGMILLADEIADPATDLDGNPQQTFGGLDITVRRNAFGRQRESFETDLDFKGLDFSAGESGVDPVHAVFIRGPWVERVGSGVEVLAQVDPDHASHTATLHGVARIVAVRSGQLLATSFHPEVTGEKRVHELFIRMIRGEA.

61–63 (GES) contributes to the L-glutamine binding site. Cys-93 (nucleophile) is an active-site residue. Residues Arg-127 and 163–164 (IR) contribute to the L-glutamine site. Active-site charge relay system residues include His-212 and Glu-214.

It belongs to the glutaminase PdxT/SNO family. In the presence of PdxS, forms a dodecamer of heterodimers. Only shows activity in the heterodimer.

The enzyme catalyses aldehydo-D-ribose 5-phosphate + D-glyceraldehyde 3-phosphate + L-glutamine = pyridoxal 5'-phosphate + L-glutamate + phosphate + 3 H2O + H(+). It carries out the reaction L-glutamine + H2O = L-glutamate + NH4(+). It participates in cofactor biosynthesis; pyridoxal 5'-phosphate biosynthesis. In terms of biological role, catalyzes the hydrolysis of glutamine to glutamate and ammonia as part of the biosynthesis of pyridoxal 5'-phosphate. The resulting ammonia molecule is channeled to the active site of PdxS. The protein is Pyridoxal 5'-phosphate synthase subunit PdxT of Paenarthrobacter aurescens (strain TC1).